The following is a 441-amino-acid chain: C-terminal-binding protein 1 (441 aa).

An interaction with GLIS2 1 region spans residues 1 to 70 (MGSSHLLNKG…EIHEKVLNEA (70 aa)). NAD(+) is bound by residues Ser100, 180 to 185 (IGLGRV), Asp204, 237 to 243 (CGLNEHN), 264 to 266 (TAR), and Asp290. The active site involves Arg266. Residues 288 to 360 (ALDVHESEPF…VNKDHLTAAT (73 aa)) are interaction with GLIS2 2. The active site involves Glu295. Ser300 carries the post-translational modification Phosphoserine. The active-site Proton donor is His315. Residue 315-318 (HAAW) coordinates NAD(+). The disordered stretch occupies residues 409-441 (SHGLPPVAHPPHAPSPGQTVKPEADRDHTSDQL). Ser423 carries the phosphoserine modification. A Glycyl lysine isopeptide (Lys-Gly) (interchain with G-Cter in SUMO) cross-link involves residue Lys429. Basic and acidic residues predominate over residues 430 to 441 (PEADRDHTSDQL).

It belongs to the D-isomer specific 2-hydroxyacid dehydrogenase family. In terms of assembly, homo- or heterodimer. Heterodimer with CTBP2. Interacts with ELK3 (via its PXDLS motif). Interacts with RBBP8 (via its PXDLS motif). Interacts with PNN, MECOM and ZFHX1B. Interacts with ZNF366 (via PXDLS motif). Interaction with SATB1 (non-acetylated form); the interaction stabilizes its attachment to DNA and promotes transcription repression. Interacts with PRDM16; the interaction represses white adipose tissue (WAT)-specific genes expression. Interacts with GLIS2, HIPK2, FOXP1, FOXP2, HDAC4, HDAC5, HDAC9, NRIP1, WIZ and ZNF217. Interacts with BCL6; the interaction is required for BCL6 transcriptional autoinhibition and inhibition of some BCL6 target genes. Interacts with IKZF4. Interacts with MCRIP1 (unphosphorylated form, via the PXDLS motif); competitively inhibiting CTBP-ZEB1 interaction. Interacts with Bassoon/BSN; this interaction targets and anchors CTBP1 to presynapses. Interacts with SIMC1. Requires NAD(+) as cofactor. ADP-ribosylated; when cells are exposed to brefeldin A. Post-translationally, the level of phosphorylation appears to be regulated during the cell cycle. Phosphorylation by HIPK2 on Ser-423 induces proteasomal degradation. In terms of processing, sumoylation on Lys-429 is promoted by the E3 SUMO-protein ligase CBX4. As to expression, expressed in a wide range of adult tissues.

Its subcellular location is the cytoplasm. It is found in the nucleus. Corepressor targeting diverse transcription regulators such as GLIS2 or BCL6. Has dehydrogenase activity. Involved in controlling the equilibrium between tubular and stacked structures in the Golgi complex. Functions in brown adipose tissue (BAT) differentiation. This Mus musculus (Mouse) protein is C-terminal-binding protein 1 (Ctbp1).